A 32-amino-acid polypeptide reads, in one-letter code: Photosystem II reaction center protein T (32 aa).

The chain crosses the membrane as a helical span at residues 3–23 (ALVYTFLLIGTLIVIFFAVFF).

Belongs to the PsbT family. In terms of assembly, PSII is composed of 1 copy each of membrane proteins PsbA, PsbB, PsbC, PsbD, PsbE, PsbF, PsbH, PsbI, PsbJ, PsbK, PsbL, PsbM, PsbT, PsbX, PsbY, PsbZ, Psb30/Ycf12, at least 3 peripheral proteins of the oxygen-evolving complex and a large number of cofactors. It forms dimeric complexes.

Its subcellular location is the plastid. The protein resides in the chloroplast thylakoid membrane. Functionally, found at the monomer-monomer interface of the photosystem II (PS II) dimer, plays a role in assembly and dimerization of PSII. PSII is a light-driven water plastoquinone oxidoreductase, using light energy to abstract electrons from H(2)O, generating a proton gradient subsequently used for ATP formation. The protein is Photosystem II reaction center protein T of Phaeodactylum tricornutum (strain CCAP 1055/1).